We begin with the raw amino-acid sequence, 290 residues long: Ribosomal RNA small subunit methyltransferase A (290 aa).

The S-adenosyl-L-methionine site is built by N27, L29, G54, E75, D100, and N125.

The protein belongs to the class I-like SAM-binding methyltransferase superfamily. rRNA adenine N(6)-methyltransferase family. RsmA subfamily.

It localises to the cytoplasm. It catalyses the reaction adenosine(1518)/adenosine(1519) in 16S rRNA + 4 S-adenosyl-L-methionine = N(6)-dimethyladenosine(1518)/N(6)-dimethyladenosine(1519) in 16S rRNA + 4 S-adenosyl-L-homocysteine + 4 H(+). Its function is as follows. Specifically dimethylates two adjacent adenosines (A1518 and A1519) in the loop of a conserved hairpin near the 3'-end of 16S rRNA in the 30S particle. May play a critical role in biogenesis of 30S subunits. The protein is Ribosomal RNA small subunit methyltransferase A of Streptococcus pneumoniae (strain JJA).